Here is a 128-residue protein sequence, read N- to C-terminus: Probable 4-amino-4-deoxy-L-arabinose-phosphoundecaprenol flippase subunit ArnF (128 aa).

Topologically, residues 1 to 2 are cytoplasmic; that stretch reads MG. A helical transmembrane segment spans residues 3 to 23; that stretch reads LMWGLFSVIIASAAQLSLGFA. Residues 24 to 35 are Periplasmic-facing; it reads ASHLPPMTHLWD. Residues 36–56 form a helical membrane-spanning segment; it reads FIAALLAFGLDARILLLGLLG. At 57-76 the chain is on the cytoplasmic side; sequence YLLSVFCWYKTLHKLALSKA. The chain crosses the membrane as a helical span at residues 77 to 97; that stretch reads YALLSMSYVLVWIASMILPGW. Residues 98–100 lie on the Periplasmic side of the membrane; that stretch reads EGT. A helical membrane pass occupies residues 101–121; that stretch reads FSLKALLGVACIMSGLMLIFL. At 122–128 the chain is on the cytoplasmic side; it reads PTTKQRY.

The protein belongs to the ArnF family. In terms of assembly, heterodimer of ArnE and ArnF.

It localises to the cell inner membrane. The protein operates within bacterial outer membrane biogenesis; lipopolysaccharide biosynthesis. Its function is as follows. Translocates 4-amino-4-deoxy-L-arabinose-phosphoundecaprenol (alpha-L-Ara4N-phosphoundecaprenol) from the cytoplasmic to the periplasmic side of the inner membrane. The protein is Probable 4-amino-4-deoxy-L-arabinose-phosphoundecaprenol flippase subunit ArnF of Escherichia coli O17:K52:H18 (strain UMN026 / ExPEC).